Reading from the N-terminus, the 404-residue chain is 11-beta-hydroxysteroid dehydrogenase type 2 (404 aa).

82–111 (TRAVLITGCDSGFGNATAKKLDTMGFTVLA) provides a ligand contact to NAD(+). Residue S219 coordinates substrate. Y232 serves as the catalytic Proton acceptor. Positions 383-404 (LTSARDIAQDQGPRPDPSPTAQ) are disordered.

It belongs to the short-chain dehydrogenases/reductases (SDR) family. As to quaternary structure, interacts with ligand-free cytoplasmic NR3C2. In terms of tissue distribution, highly expressed in kidney, adrenal and colon; detected at lower levels on lung, liver, and spleen. Expressed in oocytes. Expressed in uterine tissues and in corpora lutea.

Its subcellular location is the microsome. It localises to the endoplasmic reticulum. The enzyme catalyses an 11beta-hydroxysteroid + NAD(+) = an 11-oxosteroid + NADH + H(+). It carries out the reaction corticosterone + NAD(+) = 11-dehydrocorticosterone + NADH + H(+). The catalysed reaction is cortisol + NAD(+) = cortisone + NADH + H(+). It catalyses the reaction 11beta,17beta-dihydroxyandrost-4-ene-3-one + NAD(+) = 17beta-hydroxyandrost-4-ene-3,11-dione + NADH + H(+). The enzyme catalyses 11beta-hydroxyandrost-4-ene-3,17-dione + NAD(+) = androst-4-ene-3,11,17-trione + NADH + H(+). The protein operates within steroid metabolism. With respect to regulation, inhibited by glycyrrhetinic acid, carbenoloxone, 11-alpha-OH-progesterone and 11-beta-OH-progesterone. Functionally, catalyzes the conversion of biologically active 11beta-hydroxyglucocorticoids (11beta-hydroxysteroid) such as cortisol, to inactive 11-ketoglucocorticoids (11-oxosteroid) such as cortisone, in the presence of NAD(+). Functions as a dehydrogenase (oxidase), thereby decreasing the concentration of active glucocorticoids, thus protecting the nonselective mineralocorticoid receptor from occupation by glucocorticoids. Affinity towards corticosterone is higher than cortisol or dexamethasone. Plays an important role in maintaining glucocorticoids balance during preimplantation and protects the fetus from excessive maternal corticosterone exposure. Catalyzes the oxidation of 11beta-hydroxytestosterone (11beta,17beta-dihydroxyandrost-4-ene-3-one) to 11-ketotestosterone (17beta-hydroxyandrost-4-ene-3,11-dione), a major bioactive androgen. Catalyzes the conversion of 11beta-hydroxyandrostenedione (11beta-hydroxyandrost-4-ene-3,17-dione) to 11-ketoandrostenedione (androst-4-ene-3,11,17-trione), which can be further metabolized to 11-ketotestosterone. Converts 7-beta-25-dihydroxycholesterol to 7-oxo-25-hydroxycholesterol in vitro. 7-beta-25-dihydroxycholesterol (not 7-oxo-25-hydroxycholesterol) acts as ligand for the G-protein-coupled receptor (GPCR) Epstein-Barr virus-induced gene 2 (EBI2) and may thereby regulate immune cell migration. May protect ovulating oocytes and fertilizing spermatozoa from the adverse effects of cortisol. The chain is 11-beta-hydroxysteroid dehydrogenase type 2 (HSD11B2) from Bos taurus (Bovine).